We begin with the raw amino-acid sequence, 201 residues long: Large ribosomal subunit protein bL25 (201 aa).

It belongs to the bacterial ribosomal protein bL25 family. CTC subfamily. In terms of assembly, part of the 50S ribosomal subunit; part of the 5S rRNA/L5/L18/L25 subcomplex. Contacts the 5S rRNA. Binds to the 5S rRNA independently of L5 and L18.

This is one of the proteins that binds to the 5S RNA in the ribosome where it forms part of the central protuberance. The chain is Large ribosomal subunit protein bL25 from Thiobacillus denitrificans (strain ATCC 25259 / T1).